Consider the following 206-residue polypeptide: Large ribosomal subunit protein uL4 (206 aa).

The tract at residues 46-77 (GTRAQKDREQVRHSTKKPFKQKGTGRARAGMT) is disordered. A compositionally biased stretch (basic residues) spans 58-70 (HSTKKPFKQKGTG).

This sequence belongs to the universal ribosomal protein uL4 family. As to quaternary structure, part of the 50S ribosomal subunit.

Functionally, one of the primary rRNA binding proteins, this protein initially binds near the 5'-end of the 23S rRNA. It is important during the early stages of 50S assembly. It makes multiple contacts with different domains of the 23S rRNA in the assembled 50S subunit and ribosome. Forms part of the polypeptide exit tunnel. The polypeptide is Large ribosomal subunit protein uL4 (Polaromonas sp. (strain JS666 / ATCC BAA-500)).